Here is a 224-residue protein sequence, read N- to C-terminus: Ribose-5-phosphate isomerase A (224 aa).

Residues 26 to 29 (TGST), 81 to 84 (DGAD), and 94 to 97 (KGGG) contribute to the substrate site. The Proton acceptor role is filled by Glu-103. Residue Lys-121 coordinates substrate.

This sequence belongs to the ribose 5-phosphate isomerase family. Homodimer.

The catalysed reaction is aldehydo-D-ribose 5-phosphate = D-ribulose 5-phosphate. Its pathway is carbohydrate degradation; pentose phosphate pathway; D-ribose 5-phosphate from D-ribulose 5-phosphate (non-oxidative stage): step 1/1. In terms of biological role, catalyzes the reversible conversion of ribose-5-phosphate to ribulose 5-phosphate. The sequence is that of Ribose-5-phosphate isomerase A from Listeria monocytogenes serovar 1/2a (strain ATCC BAA-679 / EGD-e).